The following is a 531-amino-acid chain: Serine-type carboxypeptidase F (531 aa).

The signal sequence occupies residues 1–25; that stretch reads MLFRSLLSTAVLAVSLCTDNASAAK. The N-linked (GlcNAc...) asparagine glycan is linked to Asn-20. The propeptide occupies 26–52; that stretch reads HGRFGQKARDAMNIAKRSANAVKHSLK. Residues Asn-63, Asn-94, and Asn-155 are each glycosylated (N-linked (GlcNAc...) asparagine). Ser-211 is a catalytic residue. Asn-228, Asn-271, Asn-309, and Asn-378 each carry an N-linked (GlcNAc...) asparagine glycan. Asp-430 is a catalytic residue. N-linked (GlcNAc...) asparagine glycans are attached at residues Asn-436 and Asn-444. His-507 is an active-site residue.

Belongs to the peptidase S10 family. Monomer.

Its activity is regulated as follows. Inhibited by DFP, and Hg(Cl)2. Functionally, removes any amino acid from the C-terminus of a long peptide. Digests preferentially peptides containing a positively charged residue in P1' position, as well as arginine, lysine or phenylalanine in P1 position of ester substrate. Also catalyzes peptide synthesis. This chain is Serine-type carboxypeptidase F (pepF), found in Aspergillus niger.